Here is a 314-residue protein sequence, read N- to C-terminus: Flotillin-like protein FloA (314 aa).

A helical transmembrane segment spans residues 4-24 (IGPIIIAVLIIIFLIVFFTLV).

Belongs to the flotillin-like FloA family. In terms of assembly, homooligomerizes.

It is found in the cell membrane. It localises to the membrane raft. Its function is as follows. Found in functional membrane microdomains (FMM) that may be equivalent to eukaryotic membrane rafts. FMMs are highly dynamic and increase in number as cells age. Flotillins are thought to be important factors in membrane fluidity. In Listeria innocua serovar 6a (strain ATCC BAA-680 / CLIP 11262), this protein is Flotillin-like protein FloA.